The following is a 313-amino-acid chain: Fructose-1,6-bisphosphatase class 1 (313 aa).

Mg(2+)-binding residues include glutamate 90, aspartate 111, leucine 113, and aspartate 114. Substrate contacts are provided by residues 114 to 117, tyrosine 222, and lysine 253; that span reads DGSS. Position 259 (glutamate 259) interacts with Mg(2+).

It belongs to the FBPase class 1 family. Homotetramer. It depends on Mg(2+) as a cofactor.

Its subcellular location is the cytoplasm. It catalyses the reaction beta-D-fructose 1,6-bisphosphate + H2O = beta-D-fructose 6-phosphate + phosphate. It functions in the pathway carbohydrate biosynthesis; gluconeogenesis. This is Fructose-1,6-bisphosphatase class 1 from Geotalea uraniireducens (strain Rf4) (Geobacter uraniireducens).